Consider the following 114-residue polypeptide: SCP2 domain-containing protein YusD (114 aa).

The SCP2 domain occupies 21–101 (NASTLLITFQ…RALLKLEAIL (81 aa)).

This chain is SCP2 domain-containing protein YusD (yusD), found in Bacillus subtilis (strain 168).